Reading from the N-terminus, the 355-residue chain is UDP-N-acetylglucosamine--N-acetylmuramyl-(pentapeptide) pyrophosphoryl-undecaprenol N-acetylglucosamine transferase (355 aa).

Residues 13-15 (TGG), N125, R162, S190, I244, and Q289 contribute to the UDP-N-acetyl-alpha-D-glucosamine site.

It belongs to the glycosyltransferase 28 family. MurG subfamily.

The protein localises to the cell inner membrane. The enzyme catalyses di-trans,octa-cis-undecaprenyl diphospho-N-acetyl-alpha-D-muramoyl-L-alanyl-D-glutamyl-meso-2,6-diaminopimeloyl-D-alanyl-D-alanine + UDP-N-acetyl-alpha-D-glucosamine = di-trans,octa-cis-undecaprenyl diphospho-[N-acetyl-alpha-D-glucosaminyl-(1-&gt;4)]-N-acetyl-alpha-D-muramoyl-L-alanyl-D-glutamyl-meso-2,6-diaminopimeloyl-D-alanyl-D-alanine + UDP + H(+). The protein operates within cell wall biogenesis; peptidoglycan biosynthesis. In terms of biological role, cell wall formation. Catalyzes the transfer of a GlcNAc subunit on undecaprenyl-pyrophosphoryl-MurNAc-pentapeptide (lipid intermediate I) to form undecaprenyl-pyrophosphoryl-MurNAc-(pentapeptide)GlcNAc (lipid intermediate II). The polypeptide is UDP-N-acetylglucosamine--N-acetylmuramyl-(pentapeptide) pyrophosphoryl-undecaprenol N-acetylglucosamine transferase (Neisseria meningitidis serogroup A / serotype 4A (strain DSM 15465 / Z2491)).